Here is a 41-residue protein sequence, read N- to C-terminus: Large ribosomal subunit protein bL36 (41 aa).

This sequence belongs to the bacterial ribosomal protein bL36 family.

This Cereibacter sphaeroides (strain ATCC 17029 / ATH 2.4.9) (Rhodobacter sphaeroides) protein is Large ribosomal subunit protein bL36.